The following is a 330-amino-acid chain: NADH-quinone oxidoreductase subunit H (330 aa).

9 helical membrane-spanning segments follow: residues 5–25 (LFFI…IACL), 44–64 (IGPD…MIKL), 78–98 (FIFL…LAPI), 122–142 (VLYV…AGLA), 156–176 (VMGL…VIMI), 192–212 (IFGW…MASF), 240–260 (MRWA…SIVI), 271–293 (FWFV…FFLW), and 310–330 (CWKI…IALI).

Belongs to the complex I subunit 1 family. In terms of assembly, NDH-1 is composed of 14 different subunits. Subunits NuoA, H, J, K, L, M, N constitute the membrane sector of the complex.

The protein localises to the cell inner membrane. It carries out the reaction a quinone + NADH + 5 H(+)(in) = a quinol + NAD(+) + 4 H(+)(out). Functionally, NDH-1 shuttles electrons from NADH, via FMN and iron-sulfur (Fe-S) centers, to quinones in the respiratory chain. The immediate electron acceptor for the enzyme in this species is believed to be ubiquinone. Couples the redox reaction to proton translocation (for every two electrons transferred, four hydrogen ions are translocated across the cytoplasmic membrane), and thus conserves the redox energy in a proton gradient. This subunit may bind ubiquinone. This chain is NADH-quinone oxidoreductase subunit H, found in Campylobacter curvus (strain 525.92).